The chain runs to 1109 residues: Cation channel sperm-associated auxiliary subunit beta (1109 aa).

Over 1–1055 (MESPLIYVML…QIYVDEVPLP (1055 aa)) the chain is Extracellular. Cys-35 and Cys-60 are oxidised to a cystine. N-linked (GlcNAc...) asparagine glycosylation is found at Asn-66, Asn-90, and Asn-118. Cys-189 and Cys-302 form a disulfide bridge. The N-linked (GlcNAc...) asparagine glycan is linked to Asn-321. Cys-330 and Cys-343 are disulfide-bonded. A glycan (N-linked (GlcNAc...) asparagine) is linked at Asn-672. Cystine bridges form between Cys-720/Cys-818, Cys-831/Cys-1039, Cys-913/Cys-922, and Cys-924/Cys-939. 2 N-linked (GlcNAc...) asparagine glycosylation sites follow: Asn-915 and Asn-923. A glycan (N-linked (GlcNAc...) asparagine) is linked at Asn-1017. A helical transmembrane segment spans residues 1056-1078 (FPGHALIAVATSVVLGVLIFIAF). At 1079-1109 (VFQLRNIHPLKALKKSIRGNPGLTSSTTVSS) the chain is on the cytoplasmic side.

Component of the CatSper complex or CatSpermasome composed of the core pore-forming members CATSPER1, CATSPER2, CATSPER3 and CATSPER4 as well as auxiliary members CATSPERB, CATSPERG2, CATSPERD, CATSPERE, CATSPERZ, C2CD6/CATSPERT, SLCO6C1, TMEM249, TMEM262 and EFCAB9. HSPA1 may be an additional auxiliary complex member. The core complex members CATSPER1, CATSPER2, CATSPER3 and CATSPER4 form a heterotetrameric channel. The auxiliary CATSPERB, CATSPERG2, CATSPERD and CATSPERE subunits form a pavilion-like structure over the pore which stabilizes the complex through interactions with CATSPER4, CATSPER3, CATSPER1 and CATSPER2 respectively. SLCO6C1 interacts with CATSPERE and TMEM262/CATSPERH interacts with CATSPERB, further stabilizing the complex. C2CD6/CATSPERT interacts at least with CATSPERD and is required for targeting the CatSper complex in the flagellar membrane. In terms of tissue distribution, testis-specific. Specifically present in the principal piece of sperm tail (at protein level). Specifically expressed in the seminiferous tubules but not in the interstitial cells. Within the tubules, it is expressed in spermatocytes and spermatids, but not in spermatogonia.

Its subcellular location is the cell projection. The protein localises to the cilium. It is found in the flagellum membrane. Functionally, auxiliary component of the CatSper complex, a complex involved in sperm cell hyperactivation. Sperm cell hyperactivation is needed for sperm motility which is essential late in the preparation of sperm for fertilization. The chain is Cation channel sperm-associated auxiliary subunit beta from Mus musculus (Mouse).